Here is a 194-residue protein sequence, read N- to C-terminus: Cysteine and glycine-rich protein 3 (194 aa).

The tract at residues 1–5 (MPNWG) is interaction with TCAP. Positions 10–61 (CGACDKTVYHAEEIQCNGRSFHKTCFHCMACRKALDSTTVAAHESEIYCKVC) constitute an LIM zinc-binding 1 domain. The Nuclear localization signal motif lies at 64-69 (RKYGPK). The segment at 94-105 (QSPKPARAATTS) is interaction with CLF2. Phosphoserine is present on residues serine 95, serine 111, and serine 153. The 52-residue stretch at 120–171 (CPRCGKSVYAAEKVMGGGKPWHKTCFPCAICGKSLESTNVTDKDGELYCKVC) folds into the LIM zinc-binding 2 domain.

Self-associates. Oligomeric in the cytoplasm and monomeric in the nucleus. Homooligomers preferentially form along the actin cytoskeleton. Interacts with TCAP, ACTN2 and NRAP. Interacts with LDHD, SPTB, MYOD1, MYOG, MYF6. Interacts with GLRX3 (via C-terminus); GLRX3 and calcineurin compete for interaction with CSRP3. Interacts with CFL2; the stoichiometry influences F-actin depolymerization and possibly two molecules of CFL2 can interact with one molecule of CSRP3 resulting in the highest functional impact; the interaction is stronger with phosphorylated CFL2. In terms of processing, phosphorylated by PKC/PRKCA. In terms of tissue distribution, high in striated muscle and adult heart.

It is found in the nucleus. The protein localises to the cytoplasm. It localises to the cytoskeleton. Its subcellular location is the myofibril. The protein resides in the sarcomere. It is found in the z line. Functionally, positive regulator of myogenesis. Acts as a cofactor for myogenic bHLH transcription factors such as MYOD1, and probably MYOG and MYF6. Enhances the DNA-binding activity of the MYOD1:TCF3 isoform E47 complex and may promote formation of a functional MYOD1:TCF3 isoform E47:MEF2A complex involved in myogenesis. Plays a crucial and specific role in the organization of cytosolic structures in cardiomyocytes. Could play a role in mechanical stretch sensing. May be a scaffold protein that promotes the assembly of interacting proteins at Z-line structures. It is essential for calcineurin anchorage to the Z line. Required for stress-induced calcineurin-NFAT activation. The role in regulation of cytoskeleton dynamics by association with CFL2 is reported conflictingly. Proposed to contribute to the maintenance of muscle cell integrity through an actin-based mechanism. Can directly bind to actin filaments, cross-link actin filaments into bundles without polarity selectivity and protect them from dilution- and cofilin-mediated depolymerization; the function seems to involve its self-association. In vitro can inhibit PKC/PRKCA activity. Proposed to be involved in cardiac stress signaling by down-regulating excessive PKC/PRKCA signaling. This is Cysteine and glycine-rich protein 3 (Csrp3) from Rattus norvegicus (Rat).